The following is a 167-amino-acid chain: uncharacterized protein (167 aa).

Its subcellular location is the mitochondrion. This is an uncharacterized protein from Ascobolus immersus.